The following is a 139-amino-acid chain: D-ribose pyranase (139 aa).

Residue H20 is the Proton donor of the active site. Substrate is bound by residues D28, H106, and 128 to 130; that span reads YAN.

Belongs to the RbsD / FucU family. RbsD subfamily. Homodecamer.

It is found in the cytoplasm. It carries out the reaction beta-D-ribopyranose = beta-D-ribofuranose. The protein operates within carbohydrate metabolism; D-ribose degradation; D-ribose 5-phosphate from beta-D-ribopyranose: step 1/2. Its function is as follows. Catalyzes the interconversion of beta-pyran and beta-furan forms of D-ribose. The protein is D-ribose pyranase of Escherichia coli O45:K1 (strain S88 / ExPEC).